We begin with the raw amino-acid sequence, 367 residues long: Phosphoribosylaminoimidazole-succinocarboxamide synthase (367 aa).

Belongs to the SAICAR synthetase family.

The enzyme catalyses 5-amino-1-(5-phospho-D-ribosyl)imidazole-4-carboxylate + L-aspartate + ATP = (2S)-2-[5-amino-1-(5-phospho-beta-D-ribosyl)imidazole-4-carboxamido]succinate + ADP + phosphate + 2 H(+). The protein operates within purine metabolism; IMP biosynthesis via de novo pathway; 5-amino-1-(5-phospho-D-ribosyl)imidazole-4-carboxamide from 5-amino-1-(5-phospho-D-ribosyl)imidazole-4-carboxylate: step 1/2. In Saccharophagus degradans (strain 2-40 / ATCC 43961 / DSM 17024), this protein is Phosphoribosylaminoimidazole-succinocarboxamide synthase.